The chain runs to 75 residues: Kappa-thalatoxin-Cad2a (75 aa).

An N-terminal signal peptide occupies residues 1–22 (MKFQMIAAVLLIAFCLCVVVTA). A propeptide spanning residues 23 to 40 (RMELQDVEDMKNGSFQKR) is cleaved from the precursor. Positions 43 to 75 (CIDTIPKSRCTAFQCKNSMKYRLSFCRKTCGTC) constitute a ShKT domain. 3 disulfides stabilise this stretch: Cys-43/Cys-75, Cys-52/Cys-68, and Cys-57/Cys-72.

The protein belongs to the sea anemone type 1 potassium channel toxin family. Type 1a subfamily.

It localises to the secreted. It is found in the nematocyst. In terms of biological role, inhibits voltage-gated potassium channels (Kv) with higher potency for Kv1.1/KCNA1 and Kv1.3/KCNA3. The sequence is that of Kappa-thalatoxin-Cad2a from Cryptodendrum adhaesivum (Adhesive sea anemone).